A 509-amino-acid polypeptide reads, in one-letter code: Glycogen synthase (509 aa).

Lys-47 provides a ligand contact to ADP-alpha-D-glucose.

The protein belongs to the glycosyltransferase 1 family. Bacterial/plant glycogen synthase subfamily.

The enzyme catalyses [(1-&gt;4)-alpha-D-glucosyl](n) + ADP-alpha-D-glucose = [(1-&gt;4)-alpha-D-glucosyl](n+1) + ADP + H(+). It functions in the pathway glycan biosynthesis; glycogen biosynthesis. Functionally, synthesizes alpha-1,4-glucan chains using ADP-glucose. The sequence is that of Glycogen synthase from Xanthomonas oryzae pv. oryzae (strain MAFF 311018).